The sequence spans 597 residues: NADH-quinone oxidoreductase subunit C/D (597 aa).

The NADH dehydrogenase I subunit C stretch occupies residues Met1–Glu187. The tract at residues Asp211–Arg597 is NADH dehydrogenase I subunit D.

This sequence in the N-terminal section; belongs to the complex I 30 kDa subunit family. It in the C-terminal section; belongs to the complex I 49 kDa subunit family. NDH-1 is composed of 13 different subunits. Subunits NuoB, CD, E, F, and G constitute the peripheral sector of the complex.

The protein localises to the cell inner membrane. It catalyses the reaction a quinone + NADH + 5 H(+)(in) = a quinol + NAD(+) + 4 H(+)(out). Functionally, NDH-1 shuttles electrons from NADH, via FMN and iron-sulfur (Fe-S) centers, to quinones in the respiratory chain. The immediate electron acceptor for the enzyme in this species is believed to be ubiquinone. Couples the redox reaction to proton translocation (for every two electrons transferred, four hydrogen ions are translocated across the cytoplasmic membrane), and thus conserves the redox energy in a proton gradient. This chain is NADH-quinone oxidoreductase subunit C/D, found in Buchnera aphidicola subsp. Schizaphis graminum (strain Sg).